The primary structure comprises 305 residues: Virulence plasmid integrase pGP7-D (305 aa).

Positions 13–99 constitute a Core-binding (CB) domain; the sequence is LTFGDASEIW…CYISFTKFLY (87 aa). Positions 127–305 constitute a Tyr recombinase domain; that stretch reads IKTESISKQE…SPLVQTPPIL (179 aa). Active-site residues include lysine 188 and arginine 257. Tyrosine 289 (O-(3'-phospho-DNA)-tyrosine intermediate) is an active-site residue.

Belongs to the 'phage' integrase family.

This is Virulence plasmid integrase pGP7-D from Chlamydia trachomatis serovar L2 (strain ATCC VR-902B / DSM 19102 / 434/Bu).